Here is a 606-residue protein sequence, read N- to C-terminus: Elongation factor 4 (606 aa).

The tr-type G domain occupies 7-189; it reads SRIRNFCIIA…AVVDRVPPPK (183 aa). GTP is bound by residues 19–24 and 136–139; these read DHGKST and NKID.

Belongs to the TRAFAC class translation factor GTPase superfamily. Classic translation factor GTPase family. LepA subfamily.

It localises to the cell inner membrane. The enzyme catalyses GTP + H2O = GDP + phosphate + H(+). Functionally, required for accurate and efficient protein synthesis under certain stress conditions. May act as a fidelity factor of the translation reaction, by catalyzing a one-codon backward translocation of tRNAs on improperly translocated ribosomes. Back-translocation proceeds from a post-translocation (POST) complex to a pre-translocation (PRE) complex, thus giving elongation factor G a second chance to translocate the tRNAs correctly. Binds to ribosomes in a GTP-dependent manner. This chain is Elongation factor 4, found in Parasynechococcus marenigrum (strain WH8102).